An 800-amino-acid chain; its full sequence is Protein MEI2-like 5 (800 aa).

2 consecutive RRM domains span residues 168-241 (RTLF…FSIP) and 253-326 (GTLV…PSRP). Phosphoserine occurs at positions 384 and 390. 2 disordered regions span residues 470–489 (GSPNARSEPSSSSVWSTSST) and 776–800 (VVDEESKNMDLLDSQLSDDDGRERS). The segment covering 471 to 488 (SPNARSEPSSSSVWSTSS) has biased composition (low complexity). A phosphoserine mark is found at S789 and S792.

Probable RNA-binding protein that plays a role in meiosis and vegetative growth. The chain is Protein MEI2-like 5 (ML5) from Arabidopsis thaliana (Mouse-ear cress).